A 248-amino-acid chain; its full sequence is 1-(5-phosphoribosyl)-5-[(5-phosphoribosylamino)methylideneamino] imidazole-4-carboxamide isomerase (248 aa).

The active-site Proton acceptor is Asp8. Residue Asp129 is the Proton donor of the active site.

It belongs to the HisA/HisF family.

It is found in the cytoplasm. It carries out the reaction 1-(5-phospho-beta-D-ribosyl)-5-[(5-phospho-beta-D-ribosylamino)methylideneamino]imidazole-4-carboxamide = 5-[(5-phospho-1-deoxy-D-ribulos-1-ylimino)methylamino]-1-(5-phospho-beta-D-ribosyl)imidazole-4-carboxamide. It functions in the pathway amino-acid biosynthesis; L-histidine biosynthesis; L-histidine from 5-phospho-alpha-D-ribose 1-diphosphate: step 4/9. The polypeptide is 1-(5-phosphoribosyl)-5-[(5-phosphoribosylamino)methylideneamino] imidazole-4-carboxamide isomerase (Sinorhizobium medicae (strain WSM419) (Ensifer medicae)).